Consider the following 527-residue polypeptide: Hopanoid C-2 methylase (527 aa).

Positions 36 to 148 (VAAFMPPQGL…AKLTHDVTRP (113 aa)) constitute a B12-binding domain. A Radical SAM core domain is found at 173–408 (AECSKYLLGS…HDQVVAMWKD (236 aa)). [4Fe-4S] cluster-binding residues include Cys-189, Cys-193, and Cys-196.

The protein belongs to the radical SAM superfamily. [4Fe-4S] cluster is required as a cofactor.

In terms of biological role, required for methylation of hopanoids at the C-2 position. This Rhodopseudomonas palustris (strain TIE-1) protein is Hopanoid C-2 methylase.